A 603-amino-acid chain; its full sequence is Threonine--tRNA ligase (603 aa).

The segment at 197–499 (DHRKLGKELG…LIEEYAGDFP (303 aa)) is catalytic. Zn(2+)-binding residues include Cys-296, His-347, and His-476.

The protein belongs to the class-II aminoacyl-tRNA synthetase family. In terms of assembly, homodimer. It depends on Zn(2+) as a cofactor.

It is found in the cytoplasm. It carries out the reaction tRNA(Thr) + L-threonine + ATP = L-threonyl-tRNA(Thr) + AMP + diphosphate + H(+). Catalyzes the attachment of threonine to tRNA(Thr) in a two-step reaction: L-threonine is first activated by ATP to form Thr-AMP and then transferred to the acceptor end of tRNA(Thr). Also edits incorrectly charged L-seryl-tRNA(Thr). This Synechocystis sp. (strain ATCC 27184 / PCC 6803 / Kazusa) protein is Threonine--tRNA ligase.